Consider the following 118-residue polypeptide: Large ribosomal subunit protein bL20 (118 aa).

It belongs to the bacterial ribosomal protein bL20 family.

Its function is as follows. Binds directly to 23S ribosomal RNA and is necessary for the in vitro assembly process of the 50S ribosomal subunit. It is not involved in the protein synthesizing functions of that subunit. This is Large ribosomal subunit protein bL20 from Desulfovibrio desulfuricans (strain ATCC 27774 / DSM 6949 / MB).